The chain runs to 233 residues: Flagellar calcium-binding protein TB-17 (233 aa).

Positions 1–11 are enriched in polar residues; it reads MGCSGSKNASN. The interval 1-29 is disordered; sequence MGCSGSKNASNPKDGAASKGGKDGKTTAD. Residues 20–29 show a composition bias toward basic and acidic residues; the sequence is GGKDGKTTAD. 3 EF-hand domains span residues 48–83, 130–165, and 167–202; these read ESKS…ILKL, YDIF…LKEW, and VDIT…KKLQ. 13 residues coordinate Ca(2+): D61, N63, T65, K67, E72, D143, D145, S147, E154, D180, N182, S184, and E191. The disordered stretch occupies residues 203-233; that stretch reads VSGDPDDEENGANEGDGANAGDGVPAAEGSA. Low complexity predominate over residues 214–225; that stretch reads ANEGDGANAGDG.

This sequence belongs to the calflagin family.

It localises to the cell projection. The protein localises to the cilium. The protein resides in the flagellum. In terms of biological role, may contribute to the rapid motility of the trypanosomes, playing a role either in flagellar structure or in calcium metabolism. Could alternate between a GDP-bound inactive form to a calcium/GTP-bound active form. This Trypanosoma brucei brucei protein is Flagellar calcium-binding protein TB-17 (FCABP).